The chain runs to 374 residues: Ribosomal RNA large subunit methyltransferase G (374 aa).

The protein belongs to the methyltransferase superfamily. RlmG family.

The protein resides in the cytoplasm. It carries out the reaction guanosine(1835) in 23S rRNA + S-adenosyl-L-methionine = N(2)-methylguanosine(1835) in 23S rRNA + S-adenosyl-L-homocysteine + H(+). Its function is as follows. Specifically methylates the guanine in position 1835 (m2G1835) of 23S rRNA. In Pseudomonas syringae pv. syringae (strain B728a), this protein is Ribosomal RNA large subunit methyltransferase G.